Reading from the N-terminus, the 549-residue chain is Glucose-6-phosphate isomerase (549 aa).

E355 functions as the Proton donor in the catalytic mechanism. Residues H387 and K515 contribute to the active site.

Belongs to the GPI family.

The protein resides in the cytoplasm. It catalyses the reaction alpha-D-glucose 6-phosphate = beta-D-fructose 6-phosphate. It functions in the pathway carbohydrate biosynthesis; gluconeogenesis. Its pathway is carbohydrate degradation; glycolysis; D-glyceraldehyde 3-phosphate and glycerone phosphate from D-glucose: step 2/4. Its function is as follows. Catalyzes the reversible isomerization of glucose-6-phosphate to fructose-6-phosphate. The sequence is that of Glucose-6-phosphate isomerase from Haemophilus influenzae (strain PittGG).